The chain runs to 627 residues: Neutral endopeptidase (627 aa).

The region spanning 1–627 (MTRIQDDLFA…RAPENRLKIW (627 aa)) is the Peptidase M13 domain. Residue histidine 475 participates in Zn(2+) binding. Glutamate 476 is an active-site residue. Zn(2+) contacts are provided by histidine 479 and glutamate 535. Aspartate 539 serves as the catalytic Proton donor.

This sequence belongs to the peptidase M13 family. Monomer. Requires Zn(2+) as cofactor.

In terms of biological role, endopeptidase with broad substrate specificity for several oligopeptides. The polypeptide is Neutral endopeptidase (pepO) (Lactococcus lactis subsp. lactis (strain IL1403) (Streptococcus lactis)).